Here is a 218-residue protein sequence, read N- to C-terminus: PKHD-type hydroxylase IL0759 (218 aa).

One can recognise a Fe2OG dioxygenase domain in the interval 76 to 170; sequence QVARVTINRY…RLAMIGWVQS (95 aa). Positions 94, 96, and 151 each coordinate Fe cation. Arg161 contacts 2-oxoglutarate.

Fe(2+) serves as cofactor. L-ascorbate is required as a cofactor.

This Idiomarina loihiensis (strain ATCC BAA-735 / DSM 15497 / L2-TR) protein is PKHD-type hydroxylase IL0759.